A 188-amino-acid polypeptide reads, in one-letter code: Ribosome-recycling factor (188 aa).

It belongs to the RRF family.

Its subcellular location is the cytoplasm. Its function is as follows. Responsible for the release of ribosomes from messenger RNA at the termination of protein biosynthesis. May increase the efficiency of translation by recycling ribosomes from one round of translation to another. The polypeptide is Ribosome-recycling factor (Gluconacetobacter diazotrophicus (strain ATCC 49037 / DSM 5601 / CCUG 37298 / CIP 103539 / LMG 7603 / PAl5)).